Consider the following 1072-residue polypeptide: DNA-directed RNA polymerase subunit beta (1072 aa).

Belongs to the RNA polymerase beta chain family. In terms of assembly, in plastids the minimal PEP RNA polymerase catalytic core is composed of four subunits: alpha, beta, beta', and beta''. When a (nuclear-encoded) sigma factor is associated with the core the holoenzyme is formed, which can initiate transcription.

The protein localises to the plastid. It is found in the chloroplast. It carries out the reaction RNA(n) + a ribonucleoside 5'-triphosphate = RNA(n+1) + diphosphate. Functionally, DNA-dependent RNA polymerase catalyzes the transcription of DNA into RNA using the four ribonucleoside triphosphates as substrates. This Lobularia maritima (Sweet alyssum) protein is DNA-directed RNA polymerase subunit beta.